We begin with the raw amino-acid sequence, 269 residues long: 3-methyl-2-oxobutanoate hydroxymethyltransferase (269 aa).

Aspartate 50 and aspartate 89 together coordinate Mg(2+). 3-methyl-2-oxobutanoate-binding positions include 50–51 (DS), aspartate 89, and lysine 119. Glutamate 121 serves as a coordination point for Mg(2+). Glutamate 187 (proton acceptor) is an active-site residue.

Belongs to the PanB family. Homodecamer; pentamer of dimers. Mg(2+) is required as a cofactor.

It is found in the cytoplasm. The enzyme catalyses 3-methyl-2-oxobutanoate + (6R)-5,10-methylene-5,6,7,8-tetrahydrofolate + H2O = 2-dehydropantoate + (6S)-5,6,7,8-tetrahydrofolate. The protein operates within cofactor biosynthesis; (R)-pantothenate biosynthesis; (R)-pantoate from 3-methyl-2-oxobutanoate: step 1/2. Catalyzes the reversible reaction in which hydroxymethyl group from 5,10-methylenetetrahydrofolate is transferred onto alpha-ketoisovalerate to form ketopantoate. In Corynebacterium efficiens (strain DSM 44549 / YS-314 / AJ 12310 / JCM 11189 / NBRC 100395), this protein is 3-methyl-2-oxobutanoate hydroxymethyltransferase.